Consider the following 538-residue polypeptide: Protein phosphatase EYA2 (538 aa).

Positions 209–230 (HNVPNQSSESLAGEYNTHNGPS) are enriched in polar residues. A disordered region spans residues 209-263 (HNVPNQSSESLAGEYNTHNGPSTPAKEGDTDRPHRASDGKLRGRSKRSSDPSPAG). Basic and acidic residues predominate over residues 234 to 249 (KEGDTDRPHRASDGKL). Residue D274 is the Nucleophile of the active site. Residues D274, D276, and D502 each coordinate Mg(2+). D276 functions as the Proton donor in the catalytic mechanism.

Belongs to the HAD-like hydrolase superfamily. EYA family. In terms of assembly, interacts with DACH2 and SIX1, and probably with SIX2, SIX4 and SIX5. Interacts with CAPN8. Interacts with GNAZ and GNAI2; this precludes interaction with SIX1. Requires Mg(2+) as cofactor. In terms of tissue distribution, highest expression in muscle with lower levels in kidney, placenta, pancreas, brain and heart.

It is found in the cytoplasm. The protein resides in the nucleus. The enzyme catalyses O-phospho-L-tyrosyl-[protein] + H2O = L-tyrosyl-[protein] + phosphate. Functionally, functions both as protein phosphatase and as transcriptional coactivator for SIX1, and probably also for SIX2, SIX4 and SIX5. Tyrosine phosphatase that dephosphorylates 'Tyr-142' of histone H2AX (H2AXY142ph) and promotes efficient DNA repair via the recruitment of DNA repair complexes containing MDC1. 'Tyr-142' phosphorylation of histone H2AX plays a central role in DNA repair and acts as a mark that distinguishes between apoptotic and repair responses to genotoxic stress. Its function as histone phosphatase may contribute to its function in transcription regulation during organogenesis. Plays an important role in hypaxial muscle development together with SIX1 and DACH2; in this it is functionally redundant with EYA1. The sequence is that of Protein phosphatase EYA2 (EYA2) from Homo sapiens (Human).